Here is a 299-residue protein sequence, read N- to C-terminus: Putative ankyrin repeat protein R864 (299 aa).

ANK repeat units follow at residues 78-107 (SLNKCLLDSCNKGQLKIVQHLINIGANIES), 108-137 (NNNYAVLLASGGGHLEVVKYLVSQGANIKS), 139-167 (NNRVVGWASQHGRLEVVKYLVSLGADIRS), 168-197 (NDDYAVRWASEHGHLEVAKYLVSLGADIRS), 199-227 (YYYILCGASQNGYLEIIKYIVSLGADIRA), 228-257 (YNNCAVKWASQCGHIDIVKYLASQGADIRN), and 258-287 (DNDYCVGLASKNGHIEVVKYLVSQGADIKT).

The polypeptide is Putative ankyrin repeat protein R864 (Acanthamoeba polyphaga mimivirus (APMV)).